A 294-amino-acid chain; its full sequence is Putative maltodextrin utilization protein YvdJ (294 aa).

A run of 4 helical transmembrane segments spans residues 35-55, 184-204, 228-248, and 249-269; these read LSFLFLFLTACLMAPLAVSFV, MIMMLAYTVVSMIQLLLTFVL, IAICASALPAFAAAAIGMVHF, and DLITVLMIHSCGVTLMISFAF.

The protein resides in the cell membrane. In terms of biological role, could have a role in maltodextrin utilization. This Bacillus subtilis (strain 168) protein is Putative maltodextrin utilization protein YvdJ (yvdJ).